A 174-amino-acid chain; its full sequence is MAAAMVPGRSESWERGEPGRPALYFCGSIRGGREDRTLYERIVSRLRRFGTVLTEHVAAAELGARGEEAAGGDRLIHEQDLEWLQQADVVVAEVTQPSLGVGYELGRAVAFNKRILCLFRPQSGRVLSAMIRGAADGSRFQVWDYEEGEVEALLDRYFEADPPGQVAASPDPTT.

An N-acetylalanine modification is found at Ala-2. Gly-27 contributes to the 5-hydroxymethyl-dUMP binding site. Ser-28 bears the Phosphoserine mark. 6 residues coordinate 5-hydroxymethyl-dUMP: Ile-29, Arg-30, Gly-31, Ser-98, Gly-100, and Glu-104. Ser-98 is subject to Phosphoserine. A phosphoserine mark is found at Ser-123, Ser-128, Ser-138, and Ser-169. Residue Ser-128 coordinates 5-hydroxymethyl-dUMP.

It belongs to the 2'-deoxynucleoside 5'-phosphate N-hydrolase 1 family. In terms of assembly, monomer and homodimer. In terms of tissue distribution, expressed at low levels in brain, colon, lung, peripheral blood leukocytes, placenta, small intestine, and thymus. Expressed at high levels in heart, kidney, liver, skeletal muscle and spleen. Overexpressed in a significant proportion of breast cancers.

It localises to the cytoplasm. Its subcellular location is the nucleus. The enzyme catalyses 5-hydroxymethyl-dUMP + H2O = 5-hydroxymethyluracil + 2-deoxy-D-ribose 5-phosphate. Its activity is regulated as follows. Inhibited by AMP and GMP. In terms of biological role, part of a nucleotide salvage pathway that eliminates epigenetically modified 5-hydroxymethyl-dCMP (hmdCMP) in a two-step process entailing deamination to cytotoxic 5-hydroxymethyl-dUMP (hmdUMP), followed by its hydrolysis into 5-hydroxymethyluracil (hmU) and 2-deoxy-D-ribose 5-phosphate (deoxyribosephosphate). Catalyzes the second step in that pathway, the hydrolysis of the N-glycosidic bond in hmdUMP, degrading this cytotoxic nucleotide to avoid its genomic integration. The protein is 5-hydroxymethyl-dUMP N-hydrolase of Homo sapiens (Human).